We begin with the raw amino-acid sequence, 132 residues long: MSVNDPLGDMLTRIRNAIGRKKTTVSTPASRLRARVLDVMKAEGYIRDYTQVDYDNGKSELEIQLKYLEGAPVIREIARVSKPGRRVYVSVKSIPHVANGLGIAILSTPKGVMADHEAREKNVGGEFLCQIF.

Belongs to the universal ribosomal protein uS8 family. Part of the 30S ribosomal subunit. Contacts proteins S5 and S12.

In terms of biological role, one of the primary rRNA binding proteins, it binds directly to 16S rRNA central domain where it helps coordinate assembly of the platform of the 30S subunit. The sequence is that of Small ribosomal subunit protein uS8 from Chelativorans sp. (strain BNC1).